Consider the following 574-residue polypeptide: E3 ubiquitin-protein ligase TRIM23 (574 aa).

Residues 31–76 (CGVCEDVFSLQGDKVPRLLLCGHTVCHDCLTRLPLHGRAIRCPFDR) form an RING-type; degenerate zinc finger. The B box-type; degenerate zinc finger occupies 122 to 168 (ESIIRCDEDEAHVASVYCTVCATHLCSDCSQVTHSTKTLAKHRRVPL). A coiled-coil region spans residues 352-379 (RVVLAKQEITRLLETLQKQQQQFTEVAD). The ARF-like stretch occupies residues 390–574 (TFTKDNRVHI…LVAAGVLDVA (185 aa)). GTP is bound by residues 411–418 (GLDGAGKT), 454–458 (DVGGK), and 513–516 (NKQD).

This sequence in the C-terminal section; belongs to the small GTPase superfamily. Arf family. As to quaternary structure, homodimer. Interacts with PSCD1. Interacts with UBE2D2. Interacts with TBK1 (via N-terminal kinase domain) and p62/SQSTM1.

It is found in the cytoplasm. The protein localises to the endomembrane system. It localises to the golgi apparatus membrane. The protein resides in the lysosome membrane. It carries out the reaction S-ubiquitinyl-[E2 ubiquitin-conjugating enzyme]-L-cysteine + [acceptor protein]-L-lysine = [E2 ubiquitin-conjugating enzyme]-L-cysteine + N(6)-ubiquitinyl-[acceptor protein]-L-lysine.. It functions in the pathway protein modification; protein ubiquitination. In terms of biological role, acts as an E3 ubiquitin-protein ligase. Plays an essential role in autophagy activation during viral infection. Mechanistically, activates TANK-binding kinase 1/TBK1 by facilitating its dimerization and ability to phosphorylate the selective autophagy receptor SQSTM1. In order to achieve this function, TRIM23 mediates 'Lys-27'-linked auto-ubiquitination of its ADP-ribosylation factor (ARF) domain to induce its GTPase activity and its recruitment to autophagosomes. This is E3 ubiquitin-protein ligase TRIM23 (Trim23) from Mus musculus (Mouse).